We begin with the raw amino-acid sequence, 78 residues long: Protein SlyX homolog (78 aa).

The protein belongs to the SlyX family.

The protein is Protein SlyX homolog of Xanthomonas euvesicatoria pv. vesicatoria (strain 85-10) (Xanthomonas campestris pv. vesicatoria).